Consider the following 43-residue polypeptide: Neurotrophin-4 (43 aa).

It belongs to the NGF-beta family.

Functionally, NT-4 could play a role in oogenesis and/or early embryogenesis. NT-4 interacts with the low affinity NGF receptor and elicits neurite outgrowth from explanted dorsal root ganglia with no and lower activity in sympathetic and nodose ganglia, respectively. The sequence is that of Neurotrophin-4 (NTF4) from Macrovipera lebetinus (Levantine viper).